Consider the following 114-residue polypeptide: Flagellar hook-basal body complex protein FliE (114 aa).

It belongs to the FliE family.

The protein localises to the bacterial flagellum basal body. The protein is Flagellar hook-basal body complex protein FliE of Burkholderia cenocepacia (strain ATCC BAA-245 / DSM 16553 / LMG 16656 / NCTC 13227 / J2315 / CF5610) (Burkholderia cepacia (strain J2315)).